The sequence spans 215 residues: S-crystallin 4 (215 aa).

Positions 2-80 (PSYTLHYFNH…YLAREFGFHG (79 aa)) constitute a GST N-terminal domain. In terms of domain architecture, GST C-terminal spans 82–215 (NNMDMARVDY…YLQKRSRTEF (134 aa)).

Belongs to the GST superfamily. Lens.

In terms of biological role, S-crystallins are structural components of squids and octopi eye lens. Contains relatively little if any GST activity. The polypeptide is S-crystallin 4 (Enteroctopus dofleini (North Pacific giant octopus)).